Here is a 145-residue protein sequence, read N- to C-terminus: 3-dehydroquinate dehydratase 2 (145 aa).

Tyrosine 22 (proton acceptor) is an active-site residue. Residues asparagine 73, histidine 79, and aspartate 86 each contribute to the substrate site. Residue histidine 101 is the Proton donor of the active site. Substrate contacts are provided by residues 102–103 and arginine 112; that span reads IS.

It belongs to the type-II 3-dehydroquinase family. As to quaternary structure, homododecamer.

The catalysed reaction is 3-dehydroquinate = 3-dehydroshikimate + H2O. It functions in the pathway metabolic intermediate biosynthesis; chorismate biosynthesis; chorismate from D-erythrose 4-phosphate and phosphoenolpyruvate: step 3/7. Its function is as follows. Catalyzes a trans-dehydration via an enolate intermediate. This chain is 3-dehydroquinate dehydratase 2 (aroQ2), found in Corynebacterium efficiens (strain DSM 44549 / YS-314 / AJ 12310 / JCM 11189 / NBRC 100395).